The primary structure comprises 194 residues: INO80 complex subunit 4 (194 aa).

2 disordered regions span residues 24 to 107 and 170 to 194; these read KEKQ…NSGL and STHAESSPMDATSPVDSMPESATGI. Composition is skewed to polar residues over residues 28 to 38 and 82 to 97; these read NFTASPSSQPK and SKPSSGAATPTRSAPK. Serine 86 carries the phosphoserine modification. Threonine 90 is subject to Phosphothreonine.

As to quaternary structure, component of the INO80 chromatin remodeling complex.

The protein resides in the cytoplasm. It localises to the nucleus. Functionally, component of the INO80 complex which remodels chromatin by shifting nucleosomes and is involved in DNA repair. The sequence is that of INO80 complex subunit 4 (ies4) from Schizosaccharomyces pombe (strain 972 / ATCC 24843) (Fission yeast).